Here is a 163-residue protein sequence, read N- to C-terminus: Ribosome maturation factor RimP (163 aa).

It belongs to the RimP family.

Its subcellular location is the cytoplasm. In terms of biological role, required for maturation of 30S ribosomal subunits. This is Ribosome maturation factor RimP from Polynucleobacter asymbioticus (strain DSM 18221 / CIP 109841 / QLW-P1DMWA-1) (Polynucleobacter necessarius subsp. asymbioticus).